The primary structure comprises 377 residues: DNA methyltransferase CcrM (377 aa).

Residues 271 to 373 (LGKAELTVMT…LRKIIREQMA (103 aa)) form the RAMA domain.

The protein belongs to the N(4)/N(6)-methyltransferase family.

The catalysed reaction is a 2'-deoxyadenosine in DNA + S-adenosyl-L-methionine = an N(6)-methyl-2'-deoxyadenosine in DNA + S-adenosyl-L-homocysteine + H(+). Its function is as follows. A beta subtype methylase that recognizes the double-stranded sequence 5'-GANTC-3' and methylates A-2 on both strands. CcrM-mediated methylation has important cellular functions. Contributes to the accurate cell-cycle control of DNA replication and cellular morphology. In Brucella canis (strain ATCC 23365 / NCTC 10854 / RM-666), this protein is DNA methyltransferase CcrM (ccrM).